A 307-amino-acid polypeptide reads, in one-letter code: UDP-N-acetylenolpyruvoylglucosamine reductase (307 aa).

The 167-residue stretch at 27 to 193 folds into the FAD-binding PCMH-type domain; it reads RVGGPADVVF…LDAVFEGLAD (167 aa). Arg-172 is a catalytic residue. Catalysis depends on Ser-222, which acts as the Proton donor. Glu-299 is an active-site residue.

Belongs to the MurB family. FAD serves as cofactor.

The protein localises to the cytoplasm. It catalyses the reaction UDP-N-acetyl-alpha-D-muramate + NADP(+) = UDP-N-acetyl-3-O-(1-carboxyvinyl)-alpha-D-glucosamine + NADPH + H(+). It participates in cell wall biogenesis; peptidoglycan biosynthesis. In terms of biological role, cell wall formation. The polypeptide is UDP-N-acetylenolpyruvoylglucosamine reductase (Caulobacter sp. (strain K31)).